Here is a 186-residue protein sequence, read N- to C-terminus: MVVVGLGNPGPRYAFTRHNVGFLFLDFLKSKDWKTEKYFAWSRIKLAGNDVALVKPLTYMNLSGLAMPHVLKFFNASPDDIIVVYDDVSLKLGRIRIRKKGSDGGHNGMKSIIQALGTQEIKRIRVGIGDKPEGMDLVDFVLGEFSDEEWIILNKVFEVMKEALEVILIEGTEKAMSIYNSLEVRV.

Y13 lines the tRNA pocket. Catalysis depends on H18, which acts as the Proton acceptor. TRNA-binding residues include Y59, N61, and N107.

It belongs to the PTH family. As to quaternary structure, monomer.

It is found in the cytoplasm. It carries out the reaction an N-acyl-L-alpha-aminoacyl-tRNA + H2O = an N-acyl-L-amino acid + a tRNA + H(+). Its function is as follows. Hydrolyzes ribosome-free peptidyl-tRNAs (with 1 or more amino acids incorporated), which drop off the ribosome during protein synthesis, or as a result of ribosome stalling. In terms of biological role, catalyzes the release of premature peptidyl moieties from peptidyl-tRNA molecules trapped in stalled 50S ribosomal subunits, and thus maintains levels of free tRNAs and 50S ribosomes. This is Peptidyl-tRNA hydrolase from Thermotoga petrophila (strain ATCC BAA-488 / DSM 13995 / JCM 10881 / RKU-1).